A 148-amino-acid chain; its full sequence is Endoribonuclease YbeY (148 aa).

Zn(2+) is bound by residues His113, His117, and His123.

The protein belongs to the endoribonuclease YbeY family. The cofactor is Zn(2+).

The protein resides in the cytoplasm. Its function is as follows. Single strand-specific metallo-endoribonuclease involved in late-stage 70S ribosome quality control and in maturation of the 3' terminus of the 16S rRNA. This is Endoribonuclease YbeY from Borrelia turicatae (strain 91E135).